Reading from the N-terminus, the 340-residue chain is NADH-quinone oxidoreductase subunit H (340 aa).

Transmembrane regions (helical) follow at residues 4-24, 78-98, 113-133, 151-171, 184-204, 244-264, 273-293, and 316-336; these read TIGI…PLLI, YLFV…WAVI, VLYL…AGWA, VSYE…AGSM, MLHW…ISGI, SMIL…LSPF, IFFI…FLFV, and VLIP…VAHV.

Belongs to the complex I subunit 1 family. In terms of assembly, NDH-1 is composed of 14 different subunits. Subunits NuoA, H, J, K, L, M, N constitute the membrane sector of the complex.

The protein resides in the cell inner membrane. The catalysed reaction is a quinone + NADH + 5 H(+)(in) = a quinol + NAD(+) + 4 H(+)(out). Functionally, NDH-1 shuttles electrons from NADH, via FMN and iron-sulfur (Fe-S) centers, to quinones in the respiratory chain. The immediate electron acceptor for the enzyme in this species is believed to be ubiquinone. Couples the redox reaction to proton translocation (for every two electrons transferred, four hydrogen ions are translocated across the cytoplasmic membrane), and thus conserves the redox energy in a proton gradient. This subunit may bind ubiquinone. The polypeptide is NADH-quinone oxidoreductase subunit H (Legionella pneumophila (strain Lens)).